A 248-amino-acid polypeptide reads, in one-letter code: HTH-type transcriptional regulator GgaR (248 aa).

The HTH gntR-type domain occupies 22-90; the sequence is TPLYIKFAET…RGYGTQINNI (69 aa). Residues 50–69 constitute a DNA-binding region (H-T-H motif); sequence ERDLSQLTGVSRITVRKAMQ.

Senses ADP-glucose (ADPG), which is the substrate for glycogen elongation, as an effector. In the presence of ADPG, GgaR becomes inactive and derepresses the yegTUV operon, leading to glycogen accumulation. In contrast, in the absence of glucose, the concentration of ADPG decreases, GgaR becomes active, and glycogen accumulation is repressed. Transcriptional regulator that regulates glycogen accumulation in response to the amount of glucose available to the cell. Acts as a repressor of the yegTUV operon, which may be involved in glycogen accumulation. This is HTH-type transcriptional regulator GgaR from Escherichia coli O6:H1 (strain CFT073 / ATCC 700928 / UPEC).